Here is a 3176-residue protein sequence, read N- to C-terminus: Large tegument protein deneddylase (3176 aa).

The segment covering 1–12 (MSNGDWGQSQRP) has biased composition (polar residues). The interval 1–28 (MSNGDWGQSQRPRGTGPMRGIRTMDVNA) is disordered. Residues 1 to 268 (MSNGDWGQSQ…YEANGSGFDL (268 aa)) form a deubiquitination activity region. The Peptidase C76 domain maps to 41-258 (LGTASCNQAH…MLEHYGVYDF (218 aa)). Active-site residues include Cys61, Asp193, and His195. The tract at residues 319 to 342 (PAARYSPAKTNSPPPSPASAAPAS) is disordered. 5 repeat units span residues 335-339 (PASAA), 340-344 (PASAA), 345-349 (PASAA), 350-354 (PASAA), and 355-359 (PASAA). Positions 335 to 384 (PASAAPASAAPASAAPASAAPASAAQASVAPASVAPASAAPASAAPDSAA) are 10 X 5 AA approximate repeats of P-A-S-A-A. The stretch at 360–364 (QASVA) is one 6; approximate repeat. The stretch at 365–369 (PASVA) is one 7; approximate repeat. A run of 2 repeats spans residues 370-374 (PASAA) and 375-379 (PASAA). Positions 376-386 (ASAAPDSAAPA) are enriched in low complexity. Disordered stretches follow at residues 376–683 (ASAA…GSGL), 928–950 (LLSG…SIYR), 1170–1193 (APIS…TPPL), 1435–1461 (LMET…RARE), 2610–3008 (GLVS…PGAR), and 3023–3043 (TYTV…KMPK). The stretch at 380-384 (PDSAA) is one 10; approximate repeat. The span at 457-488 (PRPPVPPHRPPSAARLPPPVIPIPHQSPPASP) shows a compositional bias: pro residues. Residues 519 to 546 (AAPSNPEIPLTTPSPSPTAAAAPTATTL) show a composition bias toward low complexity. Residues 579 to 636 (APSPLLPQQQPPPSAAPAPSPLLPQQQPPPSAARAPSPLPPQQQPLPSATPAPPPAQQ) show a composition bias toward pro residues. The tract at residues 581 to 611 (SPLLPQQQPPPSAAPAPSPLLPQQQPPPSAA) is interaction with inner tegument protein. A compositionally biased stretch (low complexity) spans 1170-1182 (APISPASPSATPA). Positions 2619-2630 (SADNTPASSDRL) are enriched in polar residues. Residues 2643–2654 (EGSTTAESEASG) are compositionally biased toward low complexity. Residues 2738–2747 (QPAPQQPPSS) show a composition bias toward pro residues. 2 stretches are compositionally biased toward polar residues: residues 2761-2772 (SPHSTPSTASGS) and 2811-2831 (SAAS…SSQD). A compositionally biased stretch (basic and acidic residues) spans 2839–2854 (MQREKKQQGGREEAAE). Low complexity-rich tracts occupy residues 2872–2886 (APVV…ATPA) and 2901–2912 (APALGSGLAAPA).

The protein belongs to the herpesviridae large tegument protein family. In terms of assembly, interacts with host CUL1 and CUL4A; these interactions inhibit the E3 ligase activity of cullins. Interacts with inner tegument protein. Interacts with capsid vertex specific component CVC2. Interacts with the major capsid protein/MCP. Interacts with host TRIM25 and YWHAZ.

Its subcellular location is the virion tegument. It localises to the host cytoplasm. It is found in the host nucleus. It catalyses the reaction Thiol-dependent hydrolysis of ester, thioester, amide, peptide and isopeptide bonds formed by the C-terminal Gly of ubiquitin (a 76-residue protein attached to proteins as an intracellular targeting signal).. Large tegument protein that plays multiple roles in the viral cycle. During viral entry, remains associated with the capsid while most of the tegument is detached and participates in the capsid transport toward the host nucleus. Plays a role in the routing of the capsid at the nuclear pore complex and subsequent uncoating. Within the host nucleus, acts as a deneddylase and promotes the degradation of nuclear CRLs (cullin-RING ubiquitin ligases) and thereby stabilizes nuclear CRL substrates, while cytoplasmic CRLs remain unaffected. These modifications prevent host cell cycle S-phase progression and create a favorable environment allowing efficient viral genome replication. Participates later in the secondary envelopment of capsids. Indeed, plays a linker role for the association of the outer viral tegument to the capsids together with the inner tegument protein. Counteracts host TLR-mediated NF-kappa-B activation through both MYD88 and TICAM1-dependent pathways by interfering with 'Lys-63'- and 'Lys-48'-linked ubiquitination of signaling intermediates such as TRAF6 and IKBKG. Inhibits type I interferon production by forming a tri-molecular complex with host TRIM25 and 14-3-3 thereby promoting TRIM25 autoubiquitination and sequestration of the ligase into inactive protein aggregates. In turn, host RIGI is recruited to the complex but ubiquitination is severely impaired leading to inhibition of the pathway. Also catalyzes the removal of 'Lys-48'- and 'Lys-63'-linked ubiquitin chains on host TBK1 and STING1 suppressing cGAS-STING signaling in addition to the RIGI-MAVS pathway. Inhibits selective autophagy by deubiquitinating host SQSTM1. In turn, decreased SQSTM1 ubiquitination fails to recruit LC3 to SQSTM1-positive aggregates. In the host nucleus, deubiquitinates topoisomerase II subunits TOP2A and TOP2B thereby stabilizing SUMOylated TOP2 which halts the DNA damage response to TOP2-induced double strand DNA breaks and promotes cell survival. In Homo sapiens (Human), this protein is Large tegument protein deneddylase.